The primary structure comprises 304 residues: Bacteriochlorophyll synthase 33 kDa chain (304 aa).

The next 9 membrane-spanning stretches (helical) occupy residues 26 to 46, 51 to 71, 94 to 114, 117 to 137, 151 to 171, 178 to 198, 227 to 247, 250 to 270, and 279 to 299; these read VTWF…NVPI, GVVV…SQAA, IPGL…LVVG, LGSW…AYSV, GLVG…VLLA, GFPI…IMTI, IACT…YLFS, YHAT…SVWM, and WYNG…AFAI.

It localises to the cell membrane. It participates in porphyrin-containing compound metabolism; bacteriochlorophyll biosynthesis (light-independent). Catalyzes the esterification of bacteriochlorophyllide a by geranylgeraniol-PPi. The sequence is that of Bacteriochlorophyll synthase 33 kDa chain (bchG) from Rhodobacter capsulatus (strain ATCC BAA-309 / NBRC 16581 / SB1003).